We begin with the raw amino-acid sequence, 459 residues long: 3-carboxy-cis,cis-muconate cycloisomerase (459 aa).

This sequence belongs to the class-II fumarase/aspartase family. As to quaternary structure, homotetramer.

It localises to the cytoplasm. The enzyme catalyses 2-(carboxymethyl)-5-oxo-2,5-dihydro-2-furoate = 3-carboxy-cis,cis-muconate + H(+). Its pathway is aromatic compound metabolism; beta-ketoadipate pathway; 5-oxo-4,5-dihydro-2-furylacetate from 3-carboxy-cis,cis-muconate: step 1/2. Catalyzes an anti cycloisomerization. This chain is 3-carboxy-cis,cis-muconate cycloisomerase (pcaB), found in Pseudomonas aeruginosa (strain ATCC 15692 / DSM 22644 / CIP 104116 / JCM 14847 / LMG 12228 / 1C / PRS 101 / PAO1).